Reading from the N-terminus, the 169-residue chain is 2-C-methyl-D-erythritol 2,4-cyclodiphosphate synthase (169 aa).

A divalent metal cation contacts are provided by D13 and H15. 4-CDP-2-C-methyl-D-erythritol 2-phosphate contacts are provided by residues 13–15 (DVH) and 39–40 (HS). A divalent metal cation is bound at residue H47. 4-CDP-2-C-methyl-D-erythritol 2-phosphate contacts are provided by residues 61–63 (DIG), 66–70 (FPDTD), F144, and R147.

It belongs to the IspF family. As to quaternary structure, homotrimer. A divalent metal cation serves as cofactor.

It carries out the reaction 4-CDP-2-C-methyl-D-erythritol 2-phosphate = 2-C-methyl-D-erythritol 2,4-cyclic diphosphate + CMP. Its pathway is isoprenoid biosynthesis; isopentenyl diphosphate biosynthesis via DXP pathway; isopentenyl diphosphate from 1-deoxy-D-xylulose 5-phosphate: step 4/6. Involved in the biosynthesis of isopentenyl diphosphate (IPP) and dimethylallyl diphosphate (DMAPP), two major building blocks of isoprenoid compounds. Catalyzes the conversion of 4-diphosphocytidyl-2-C-methyl-D-erythritol 2-phosphate (CDP-ME2P) to 2-C-methyl-D-erythritol 2,4-cyclodiphosphate (ME-CPP) with a corresponding release of cytidine 5-monophosphate (CMP). This chain is 2-C-methyl-D-erythritol 2,4-cyclodiphosphate synthase, found in Cupriavidus necator (strain ATCC 17699 / DSM 428 / KCTC 22496 / NCIMB 10442 / H16 / Stanier 337) (Ralstonia eutropha).